An 827-amino-acid polypeptide reads, in one-letter code: 6-phosphofructo-2-kinase 1 (827 aa).

Disordered regions lie at residues 1-97 (MFKP…ENSA) and 149-175 (TRHH…DGLI). A compositionally biased stretch (low complexity) spans 31 to 41 (SQDSSYDLLSR). Over residues 42–59 (SSDDKIDAEKGPHDELSK) the composition is skewed to basic and acidic residues. The segment covering 72 to 97 (TPISSNWNSPGITEENTPSDSPENSA) has biased composition (polar residues). Serine 92 carries the phosphoserine modification. Threonine 157 is modified (phosphothreonine). Position 190–197 (190–197 (GLPATGKS)) interacts with ATP. Catalysis depends on residues aspartate 277 and cysteine 309. Arginine 343 contacts beta-D-fructose 6-phosphate. The active-site Phosphoserine intermediate is serine 404. Glutamate 497 is a catalytic residue. Histidine 565 functions as the Proton donor in the catalytic mechanism. Serine 644, serine 652, serine 659, and serine 667 each carry phosphoserine. Disordered regions lie at residues 649-704 (APPS…SNFN) and 799-827 (HGKD…QSHV). Over residues 671–682 (SASSSQSELSEQ) the composition is skewed to low complexity. Positions 683 to 704 (PKNSVSAQTGSNNTTLIGSNFN) are enriched in polar residues.

It catalyses the reaction beta-D-fructose 6-phosphate + ATP = beta-D-fructose 2,6-bisphosphate + ADP + H(+). With respect to regulation, phosphorylation results in the activation of the kinase activity. Functionally, synthesis of fructose 2,6-bisphosphate. This is 6-phosphofructo-2-kinase 1 (PFK26) from Saccharomyces cerevisiae (strain ATCC 204508 / S288c) (Baker's yeast).